The primary structure comprises 833 residues: Bifunctional dethiobiotin synthetase/7,8-diamino-pelargonic acid aminotransferase, mitochondrial (833 aa).

The N-terminal 23 residues, 1–23, are a transit peptide targeting the mitochondrion; sequence MIPVTATLIRHRLRHLRHRIRFK. The interval 36 to 299 is dethiobiotin synthetase; sequence HPTYLIWSAN…VLVLPPVPKD (264 aa). 47 to 52 contributes to the ATP binding site; the sequence is SLGKTL. Threonine 51 contributes to the Mg(2+) binding site. Position 81 (threonine 81) interacts with substrate. Aspartate 88 is a Mg(2+) binding site. Residues aspartate 97, 210–213, and 270–271 each bind ATP; these read ETAG and ED. Glutamate 210 contacts Mg(2+). Residues 332-830 are 7,8-diamino-pelargonic acid aminotransferase; sequence RLNGMAKLAG…TKLYKRLGEF (499 aa). Position 391–392 (391–392) interacts with (8S)-8-amino-7-oxononanoate; the sequence is WW. 453–454 is a pyridoxal 5'-phosphate binding site; it reads GS. Residue tyrosine 495 coordinates (8S)-8-amino-7-oxononanoate. ATP-binding positions include 518–520 and glutamate 545; that span reads PWY. Aspartate 637 is a binding site for pyridoxal 5'-phosphate. Lysine 666 and glycine 700 together coordinate (8S)-8-amino-7-oxononanoate. Residue lysine 666 is modified to N6-(pyridoxal phosphate)lysine. 701–702 contributes to the pyridoxal 5'-phosphate binding site; the sequence is HS. Arginine 797 is a binding site for (8S)-8-amino-7-oxononanoate.

This sequence in the N-terminal section; belongs to the dethiobiotin synthetase family. The protein in the C-terminal section; belongs to the class-III pyridoxal-phosphate-dependent aminotransferase family. BioA subfamily. In terms of assembly, homodimer. It depends on Mg(2+) as a cofactor. Pyridoxal 5'-phosphate serves as cofactor.

The protein resides in the mitochondrion matrix. It carries out the reaction (7R,8S)-7,8-diammoniononanoate + CO2 + ATP = (4R,5S)-dethiobiotin + ADP + phosphate + 3 H(+). The enzyme catalyses (8S)-8-amino-7-oxononanoate + S-adenosyl-L-methionine = S-adenosyl-4-methylsulfanyl-2-oxobutanoate + (7R,8S)-7,8-diammoniononanoate. The protein operates within cofactor biosynthesis; biotin biosynthesis; biotin from 7,8-diaminononanoate: step 1/2. It functions in the pathway cofactor biosynthesis; biotin biosynthesis; 7,8-diaminononanoate from 8-amino-7-oxononanoate (SAM route): step 1/1. Its function is as follows. Bifunctional enzyme that catalyzes two different reactions involved in the biotin biosynthesis. Catalyzes a mechanistically unusual reaction, the ATP-dependent insertion of CO2 between the N7 and N8 nitrogen atoms of 7,8-diaminopelargonic acid (DAPA) to form an ureido ring. In terms of biological role, catalyzes the transfer of the alpha-amino group from S-adenosyl-L-methionine (SAM) to 7-keto-8-aminopelargonic acid (KAPA) to form 7,8-diaminopelargonic acid (DAPA). It is the only aminotransferase known to utilize SAM as an amino donor. The protein is Bifunctional dethiobiotin synthetase/7,8-diamino-pelargonic acid aminotransferase, mitochondrial of Arabidopsis thaliana (Mouse-ear cress).